We begin with the raw amino-acid sequence, 358 residues long: Type II restriction enzyme CviJI (358 aa).

Mg(2+) serves as cofactor.

It catalyses the reaction Endonucleolytic cleavage of DNA to give specific double-stranded fragments with terminal 5'-phosphates.. Its function is as follows. A P subtype restriction enzyme that recognizes the double-stranded sequence 5'-RGCY-3' and cleaves after G-2. In the presence of ATP, there is a relaxation of its specificity and it can cleave 5'-RGCN-3' and 5'-YGCY-3', but not 5'-YGCR-3' (R.CviJI* activity). The chain is Type II restriction enzyme CviJI from Paramecium bursaria Chlorella virus IL3A (PBCV-IL3A).